We begin with the raw amino-acid sequence, 396 residues long: NADH-quinone oxidoreductase subunit D (396 aa).

It belongs to the complex I 49 kDa subunit family. As to quaternary structure, NDH-1 is composed of 14 different subunits. Subunits NuoB, C, D, E, F, and G constitute the peripheral sector of the complex.

It localises to the cell inner membrane. It catalyses the reaction a quinone + NADH + 5 H(+)(in) = a quinol + NAD(+) + 4 H(+)(out). NDH-1 shuttles electrons from NADH, via FMN and iron-sulfur (Fe-S) centers, to quinones in the respiratory chain. The immediate electron acceptor for the enzyme in this species is believed to be ubiquinone. Couples the redox reaction to proton translocation (for every two electrons transferred, four hydrogen ions are translocated across the cytoplasmic membrane), and thus conserves the redox energy in a proton gradient. This is NADH-quinone oxidoreductase subunit D from Orientia tsutsugamushi (strain Ikeda) (Rickettsia tsutsugamushi).